The chain runs to 56 residues: Large ribosomal subunit protein bL33A (56 aa).

Belongs to the bacterial ribosomal protein bL33 family.

The polypeptide is Large ribosomal subunit protein bL33A (Sorangium cellulosum (strain So ce56) (Polyangium cellulosum (strain So ce56))).